The sequence spans 315 residues: Aspartate carbamoyltransferase catalytic subunit (315 aa).

Carbamoyl phosphate is bound by residues R64 and T65. L-aspartate is bound at residue K92. Carbamoyl phosphate-binding residues include R114, H142, and Q145. R175 and R229 together coordinate L-aspartate. Residues G270 and P271 each coordinate carbamoyl phosphate.

It belongs to the aspartate/ornithine carbamoyltransferase superfamily. ATCase family. As to quaternary structure, heterododecamer (2C3:3R2) of six catalytic PyrB chains organized as two trimers (C3), and six regulatory PyrI chains organized as three dimers (R2).

It catalyses the reaction carbamoyl phosphate + L-aspartate = N-carbamoyl-L-aspartate + phosphate + H(+). The protein operates within pyrimidine metabolism; UMP biosynthesis via de novo pathway; (S)-dihydroorotate from bicarbonate: step 2/3. Functionally, catalyzes the condensation of carbamoyl phosphate and aspartate to form carbamoyl aspartate and inorganic phosphate, the committed step in the de novo pyrimidine nucleotide biosynthesis pathway. This Methylorubrum extorquens (strain CM4 / NCIMB 13688) (Methylobacterium extorquens) protein is Aspartate carbamoyltransferase catalytic subunit.